Here is a 529-residue protein sequence, read N- to C-terminus: Bifunctional purine biosynthesis protein PurH (529 aa).

In terms of domain architecture, MGS-like spans 1-146 (MAPTALLSVS…KNHAHVAVLT (146 aa)).

It belongs to the PurH family.

It catalyses the reaction (6R)-10-formyltetrahydrofolate + 5-amino-1-(5-phospho-beta-D-ribosyl)imidazole-4-carboxamide = 5-formamido-1-(5-phospho-D-ribosyl)imidazole-4-carboxamide + (6S)-5,6,7,8-tetrahydrofolate. The enzyme catalyses IMP + H2O = 5-formamido-1-(5-phospho-D-ribosyl)imidazole-4-carboxamide. It participates in purine metabolism; IMP biosynthesis via de novo pathway; 5-formamido-1-(5-phospho-D-ribosyl)imidazole-4-carboxamide from 5-amino-1-(5-phospho-D-ribosyl)imidazole-4-carboxamide (10-formyl THF route): step 1/1. Its pathway is purine metabolism; IMP biosynthesis via de novo pathway; IMP from 5-formamido-1-(5-phospho-D-ribosyl)imidazole-4-carboxamide: step 1/1. The polypeptide is Bifunctional purine biosynthesis protein PurH (Synechococcus sp. (strain CC9311)).